The primary structure comprises 444 residues: S-locus-specific glycoprotein (444 aa).

The first 28 residues, 1-28 (MRGVIPNYHHSYTLFFFVILVLFPHVFS), serve as a signal peptide directing secretion. Residues 31–159 (TLSPNEALTI…KTNDLDRFMW (129 aa)) form the Bulb-type lectin domain. 4 N-linked (GlcNAc...) asparagine glycosylation sites follow: asparagine 43, asparagine 125, asparagine 243, and asparagine 396. The PAN domain occupies 356-437 (CGEGDGFLRM…GGQDLYVKVA (82 aa)). 2 disulfides stabilise this stretch: cysteine 387-cysteine 412 and cysteine 395-cysteine 397.

In terms of tissue distribution, stigma.

Its function is as follows. Involved in sporophytic self-incompatibility system (the inability of flowering plants to achieve self-fertilization). The protein is S-locus-specific glycoprotein (SLSG) of Brassica oleracea var. alboglabra (Chinese kale).